The sequence spans 283 residues: Acetylglutamate kinase (283 aa).

Substrate contacts are provided by residues 63 to 64 (GG), R85, and N178.

The protein belongs to the acetylglutamate kinase family. ArgB subfamily.

The protein resides in the cytoplasm. The catalysed reaction is N-acetyl-L-glutamate + ATP = N-acetyl-L-glutamyl 5-phosphate + ADP. Its pathway is amino-acid biosynthesis; L-arginine biosynthesis; N(2)-acetyl-L-ornithine from L-glutamate: step 2/4. Catalyzes the ATP-dependent phosphorylation of N-acetyl-L-glutamate. The sequence is that of Acetylglutamate kinase from Prochlorococcus marinus (strain MIT 9215).